The chain runs to 198 residues: Holliday junction branch migration complex subunit RuvA (198 aa).

The domain I stretch occupies residues 1–63 (MYDYIKGQLT…EDAQLLFGFH (63 aa)). Residues 64-142 (SEEEKDVFLK…EAPKEESSKP (79 aa)) are domain II. The flexible linker stretch occupies residues 143–147 (PKAKQ). The domain III stretch occupies residues 148-198 (QGNEQLDEAVEALLALGYKATELKKIRAFFEGTSETAEQYIKSALKMLMKG).

It belongs to the RuvA family. In terms of assembly, homotetramer. Forms an RuvA(8)-RuvB(12)-Holliday junction (HJ) complex. HJ DNA is sandwiched between 2 RuvA tetramers; dsDNA enters through RuvA and exits via RuvB. An RuvB hexamer assembles on each DNA strand where it exits the tetramer. Each RuvB hexamer is contacted by two RuvA subunits (via domain III) on 2 adjacent RuvB subunits; this complex drives branch migration. In the full resolvosome a probable DNA-RuvA(4)-RuvB(12)-RuvC(2) complex forms which resolves the HJ.

It localises to the cytoplasm. Functionally, the RuvA-RuvB-RuvC complex processes Holliday junction (HJ) DNA during genetic recombination and DNA repair, while the RuvA-RuvB complex plays an important role in the rescue of blocked DNA replication forks via replication fork reversal (RFR). RuvA specifically binds to HJ cruciform DNA, conferring on it an open structure. The RuvB hexamer acts as an ATP-dependent pump, pulling dsDNA into and through the RuvAB complex. HJ branch migration allows RuvC to scan DNA until it finds its consensus sequence, where it cleaves and resolves the cruciform DNA. This Streptococcus equi subsp. zooepidemicus (strain H70) protein is Holliday junction branch migration complex subunit RuvA.